Consider the following 274-residue polypeptide: MSSYLQESTRKAVTVTSLQGMRAAGERIAMLTAYDASFAALMERSGVDVVLVGDSLGNVVQGQKTTLPVTLDHIVYHTECVARGTTKALLMSDLPFGTYGTPEQAFHSAVRVMQAGAQMVKLEGGEWLAPTLRFLVERSIPVCAHIGLTPQSVHAFGGFKVQGRGDEAAAQLKADALAVQDAGAQMVLMEAIPATLAGEVTRLLAVPTIGIGAGPECSGQVLVMHDMLGVFPGHRPKFVRNFMDGLTTIDAAVTAYVTAVKDGTFPGPEHSFTA.

Positions 54 and 93 each coordinate Mg(2+). Residues 54–55 (DS), Asp-93, and Lys-121 each bind 3-methyl-2-oxobutanoate. Residue Glu-123 coordinates Mg(2+). Glu-190 (proton acceptor) is an active-site residue.

The protein belongs to the PanB family. As to quaternary structure, homodecamer; pentamer of dimers. Mg(2+) is required as a cofactor.

The protein resides in the cytoplasm. It carries out the reaction 3-methyl-2-oxobutanoate + (6R)-5,10-methylene-5,6,7,8-tetrahydrofolate + H2O = 2-dehydropantoate + (6S)-5,6,7,8-tetrahydrofolate. Its pathway is cofactor biosynthesis; (R)-pantothenate biosynthesis; (R)-pantoate from 3-methyl-2-oxobutanoate: step 1/2. Its function is as follows. Catalyzes the reversible reaction in which hydroxymethyl group from 5,10-methylenetetrahydrofolate is transferred onto alpha-ketoisovalerate to form ketopantoate. This Ralstonia nicotianae (strain ATCC BAA-1114 / GMI1000) (Ralstonia solanacearum) protein is 3-methyl-2-oxobutanoate hydroxymethyltransferase.